The following is a 77-amino-acid chain: Translation initiation factor IF-1, chloroplastic (77 aa).

Positions 1 to 71 constitute an S1-like domain; it reads MKEQKWTHEG…TRGRIIYRLR (71 aa).

Belongs to the IF-1 family. In terms of assembly, component of the 30S ribosomal translation pre-initiation complex which assembles on the 30S ribosome in the order IF-2 and IF-3, IF-1 and N-formylmethionyl-tRNA(fMet); mRNA recruitment can occur at any time during PIC assembly.

The protein resides in the plastid. Its subcellular location is the chloroplast. In terms of biological role, one of the essential components for the initiation of protein synthesis. Stabilizes the binding of IF-2 and IF-3 on the 30S subunit to which N-formylmethionyl-tRNA(fMet) subsequently binds. Helps modulate mRNA selection, yielding the 30S pre-initiation complex (PIC). Upon addition of the 50S ribosomal subunit IF-1, IF-2 and IF-3 are released leaving the mature 70S translation initiation complex. The protein is Translation initiation factor IF-1, chloroplastic of Coffea arabica (Arabian coffee).